We begin with the raw amino-acid sequence, 150 residues long: Arginine repressor (150 aa).

The protein belongs to the ArgR family.

The protein localises to the cytoplasm. It functions in the pathway amino-acid biosynthesis; L-arginine biosynthesis [regulation]. In terms of biological role, regulates arginine biosynthesis genes. The protein is Arginine repressor of Clostridium kluyveri (strain NBRC 12016).